The sequence spans 304 residues: Putative F-box/LRR-repeat protein 21 (304 aa).

In terms of domain architecture, F-box spans 43–90; it reads RRNWVDLPPELTTSILLRLSLTDILDNAQKVCKEWRRICKDPSMWRKI. 4 LRR repeats span residues 132–159, 173–198, 218–241, and 243–268; these read LSYITDRNLRSLGLGMCFPRVTKLGVVN, THSCIKLDLKAIGHACPQLKTLKLNS, GPLECDDDALAIAESMPKLHHLQL, and ANRLTNTGLNAILDGCPHLEHLDVRK.

The polypeptide is Putative F-box/LRR-repeat protein 21 (FBL21) (Arabidopsis thaliana (Mouse-ear cress)).